A 261-amino-acid polypeptide reads, in one-letter code: Small ribosomal subunit protein eS1B (261 aa).

The span at 1 to 18 (MTLGKNKRISKGGKRGKK) shows a compositional bias: basic residues. A disordered region spans residues 1–23 (MTLGKNKRISKGGKRGKKKAQET).

This sequence belongs to the eukaryotic ribosomal protein eS1 family. As to quaternary structure, component of the small ribosomal subunit. Mature ribosomes consist of a small (40S) and a large (60S) subunit. The 40S subunit contains about 33 different proteins and 1 molecule of RNA (18S). The 60S subunit contains about 49 different proteins and 3 molecules of RNA (25S, 5.8S and 5S).

It is found in the cytoplasm. The sequence is that of Small ribosomal subunit protein eS1B from Trypanosoma cruzi (strain CL Brener).